We begin with the raw amino-acid sequence, 130 residues long: Chemotaxis protein CheY-3 (130 aa).

The region spanning 10-127 (KILIVDDFST…TLKEKLDKIF (118 aa)) is the Response regulatory domain. 4 residues coordinate Mg(2+): Asp15, Asp16, Asp60, and Asn62. Asp60 is subject to 4-aspartylphosphate.

In terms of assembly, interacts with FliM. The cofactor is Mg(2+).

The protein localises to the cytoplasm. Its function is as follows. Acts as a response regulator to control chemotaxis. Involved in the transmission of sensory signals from the chemoreceptors to the flagellar motors. Switches the flagellar rotation by binding to the flagellar motor switch protein FliM. In its active (phosphorylated or acetylated) form, exhibits enhanced binding to a switch component, FliM, at the flagellar motor which induces a change from counterclockwise to clockwise flagellar rotation. The polypeptide is Chemotaxis protein CheY-3 (Vibrio cholerae serotype O1 (strain ATCC 39315 / El Tor Inaba N16961)).